Consider the following 309-residue polypeptide: Non-homologous end-joining factor 1 (309 aa).

The globular head stretch occupies residues 1–134 (MEAVLSALPW…TPVAVVCRQL (134 aa)). Residues 223–298 (GKTGRKRKHS…AGSEDRSTSR (76 aa)) form a C-terminal tail region. The interval 223–309 (GKTGRKRKHS…KKKKAVGLFR (87 aa)) is disordered. The span at 243-252 (HITDHQHISE) shows a compositional bias: basic and acidic residues. 2 stretches are compositionally biased toward polar residues: residues 253–265 (STDVGPSLASQEH) and 273–290 (RSQVANSQQTLPLSSTAG). Positions 297–309 (SRAKKKKAVGLFR) are enriched in basic residues. The XLM signature appears at 299-309 (AKKKKAVGLFR).

Belongs to the XRCC4-XLF family. XLF subfamily. Homodimer. Interacts with xrcc4; the interaction is direct and is mediated via a head-to-head interaction between N-terminal head regions. Component of the core long-range non-homologous end joining (NHEJ) complex (also named DNA-PK complex) composed of prkdc/DNA-PKcs, lig4, xrcc4, xrcc6/Ku70, xrcc5/Ku80 and nhej1/xlf.

The protein resides in the nucleus. The protein localises to the chromosome. Functionally, DNA repair protein involved in DNA non-homologous end joining (NHEJ); it is required for double-strand break (DSB) repair and V(D)J recombination and is also involved in telomere maintenance. Plays a key role in NHEJ by promoting the ligation of various mismatched and non-cohesive ends. In some studies, has been shown to associate with xrcc4 to form alternating helical filaments that bridge DNA and act like a bandage, holding together the broken DNA until it is repaired. Alternatively, it has also been shown that rather than forming filaments, a single nhej1 dimer interacts through both head domains with xrcc4 to promote the close alignment of DNA ends. The xrcc4-nhej1/xlf subcomplex binds to the DNA fragments of a DSB in a highly diffusive manner and robustly bridges two independent DNA molecules, holding the broken DNA fragments in close proximity to one other. The mobility of the bridges ensures that the ends remain accessible for further processing by other repair factors. The polypeptide is Non-homologous end-joining factor 1 (nhej1) (Danio rerio (Zebrafish)).